Consider the following 538-residue polypeptide: Translation initiation factor IF-3, chloroplastic (538 aa).

Residues 1–140 constitute a chloroplast transit peptide; the sequence is MVRSSCLQCD…VTQRKEIAVF (140 aa). The head stretch occupies residues 141 to 290; it reads SASGQAAEPE…EEVEEEQEVL (150 aa). 2 disordered regions span residues 146–165 and 188–210; these read AAEP…PAAK and RTDS…NWPS. The tract at residues 291–474 is IF-3 like; the sequence is SWADRRRALA…LILNLAPAGE (184 aa). A disordered region spans residues 484–538; sequence AERDRKAAAEEEGEGDDLDFVDENEDEDVEGEGEEEEAEELEEETAEGTEVPTRS. Positions 493–530 are enriched in acidic residues; that stretch reads EEEGEGDDLDFVDENEDEDVEGEGEEEEAEELEEETAE.

It belongs to the IF-3 family. As to quaternary structure, monomer. The N-terminus is blocked.

It is found in the plastid. It localises to the chloroplast. Functionally, involved in chloroplast protein synthesis. It enhances the poly(A,U,G)-dependent binding of the initiator tRNA to chloroplast 30S subunits. The polypeptide is Translation initiation factor IF-3, chloroplastic (Euglena gracilis).